The primary structure comprises 350 residues: Biotin synthase (350 aa).

The Radical SAM core domain occupies 41-268; the sequence is NEVQISRLLS…LSRVRLSAGR (228 aa). The [4Fe-4S] cluster site is built by Cys56, Cys60, and Cys63. [2Fe-2S] cluster is bound by residues Cys100, Cys131, Cys191, and Arg263.

Belongs to the radical SAM superfamily. Biotin synthase family. As to quaternary structure, homodimer. Requires [4Fe-4S] cluster as cofactor. It depends on [2Fe-2S] cluster as a cofactor.

It carries out the reaction (4R,5S)-dethiobiotin + (sulfur carrier)-SH + 2 reduced [2Fe-2S]-[ferredoxin] + 2 S-adenosyl-L-methionine = (sulfur carrier)-H + biotin + 2 5'-deoxyadenosine + 2 L-methionine + 2 oxidized [2Fe-2S]-[ferredoxin]. Its pathway is cofactor biosynthesis; biotin biosynthesis; biotin from 7,8-diaminononanoate: step 2/2. Catalyzes the conversion of dethiobiotin (DTB) to biotin by the insertion of a sulfur atom into dethiobiotin via a radical-based mechanism. This is Biotin synthase from Shewanella oneidensis (strain ATCC 700550 / JCM 31522 / CIP 106686 / LMG 19005 / NCIMB 14063 / MR-1).